The chain runs to 321 residues: Long form salivary protein D7L1 (321 aa).

The signal sequence occupies residues 1–17 (MKLPLLLAIVTTFSVVA). 2 disulfide bridges follow: Cys34–Cys71 and Cys67–Cys124. Trp55 lines the leukotriene E4 pocket. Leukotriene E4 is bound by residues Gly148 and Lys167. 3 disulfide bridges follow: Cys175/Cys210, Cys191/Cys319, and Cys250/Cys268. Residues Glu176, Arg194, and His207 each coordinate noradrenaline. Noradrenaline is bound by residues Asp283 and Glu286.

Belongs to the PBP/GOBP family. (Microbial infection) Interacts with envelope protein of dengue virus type 2. Saliva (at protein level). Female salivary gland (at protein level). Detected in the head and thorax of the female mosquitoes, where the salivary glands are located. Expressed in the distal-lateral and medial lobes of the female salivary gland but not in the carcass. No or low-level expression in the adult male mosquito tissues.

It is found in the secreted. Modulates blood feeding of female mosquitoes on vertebrate species by binding and sequestering different mediators involved in the host response, such as biogenic amines and eicosanoids. Binds serotonin, histamine, leukotriene B4, leukotriene C4, leukotriene D4, leukotriene E4, adrenaline and noradrenaline. Does not bind tryptamine and U-46619, a stable analog of thromboxane A2. Exhibits vasodilating activity. Inhibits agonist-induced platelet aggregation but not blood clotting. Inhibits noradrenaline-induced smooth muscle contraction. Promotes an influx of host neutrophils at the inoculation site. In terms of biological role, (Microbial infection) Probably promotes Plasmodium gallinaceum oocyst development in mosquito midgut. Its function is as follows. (Microbial infection) Exhibits antiviral activity against dengue virus type 2 probably through a direct interaction with dengue virus virions. The protein is Long form salivary protein D7L1 (D7) of Aedes aegypti (Yellowfever mosquito).